Consider the following 889-residue polypeptide: MSYFGEHFWGEKNHGFEVLYHSVKQGPISTKELADFIRERATIEETYSKAMAKLSKLASNGTPMGTFAPLWEVFRVSSDKLALCHLELTRKLQDLIKDVLRYGEEQLKTHKKCKEEVVSTLDAVQVLSGVSQLLPKSRENYLNRCMDQERLRRESTSQKEMDKAETKTKKAAESLRRSVEKYNSARADFEQKMLDSALRFQAMEETHLRHMKALLGSYAHSVEDTHVQIGQVHEEFKQNIENVSVEMLLRKFAESKGTGREKPGPLDFEAYSAAALQEAMKRLRGAKAFRLPGLSRREREPEPPAAVDFLEPDSGTCPEVDEEGFTVRPDVTQNSTAEPSRFSSSDSDFDDEEPRKFYVHIKPAPARAPACSPEAAAAQLRATAGSLILPPGPGGTMKRHSSRDAAGKPQRPRSAPRTSSCAERLQSEEQVSKNLFGPPLESAFDHEDFTGSSSLGFTSSPSPFSSSSPENVEDSGLDSPSHAAPGPSPDSWVPRPGTPQSPPSCRAPPPEARGIRAPPLPDSPQPLASSPGPWGLEALAGGDLMPAPADPTAREGLAAPPRRLRSRKVSCPLTRSNGDLSRSLSPSPLGSSAASTALERPSFLSQTGHGVSRGPSPVVLGSQDALPIATAFTEYVHAYFRGHSPSCLARVTGELTMTFPAGIVRVFSGTPPPPVLSFRLVHTTAIEHFQPNADLLFSDPSQSDPETKDFWLNMAALTEALQRQAEQNPTASYYNVVLLRYQFSRPGPQSVPLQLSAHWQCGATLTQVSVEYGYRPGATAVPTPLTNVQILLPVGEPVTNVRLQPAATWNLEEKRLTWRLPDVSEAGGSGRLSASWEPLSGPSTPSPVAAQFTSEGTTLSGVDLELVGSGYRMSLVKRRFATGMYLVSC.

In terms of domain architecture, F-BAR spans 1-248 (MSYFGEHFWG…NIENVSVEML (248 aa)). Residues 1–275 (MSYFGEHFWG…LDFEAYSAAA (275 aa)) are mediates membrane-binding. Positions 156 to 195 (TSQKEMDKAETKTKKAAESLRRSVEKYNSARADFEQKMLD) form a coiled coil. Residues 267 to 442 (DFEAYSAAAL…KNLFGPPLES (176 aa)) are mediates interaction with the adaptor protein complex AP-2. The interval 294–352 (LSRREREPEPPAAVDFLEPDSGTCPEVDEEGFTVRPDVTQNSTAEPSRFSSSDSDFDDE) is disordered. Phosphoserine is present on residues Ser295, Ser347, and Ser372. The tract at residues 382–596 (ATAGSLILPP…SPLGSSAAST (215 aa)) is disordered. Low complexity predominate over residues 450–469 (TGSSSLGFTSSPSPFSSSSP). Positions 496 to 511 (PGTPQSPPSCRAPPPE) are enriched in pro residues. A Phosphoserine modification is found at Ser530. The segment covering 580–596 (LSRSLSPSPLGSSAAST) has biased composition (low complexity). Residues 609 to 889 (HGVSRGPSPV…FATGMYLVSC (281 aa)) are mediates interaction with AGFG1, CALM, DAB2, EPS15, EPS15R, ITSN1 and clathrin. Ser616 carries the post-translational modification Phosphoserine. The MHD domain occupies 625 to 888 (ALPIATAFTE…RFATGMYLVS (264 aa)). The interval 826-849 (AGGSGRLSASWEPLSGPSTPSPVA) is disordered.

The protein belongs to the FCHO family. May oligomerize and form homotetramer. Interacts with AP2A2 and AP2B1; 2 subunits of the adaptor protein complex AP-2. Interacts with DAB2. Interacts with clathrin (CLTC or CLTCL1). Interacts with EPS15, EPS15R and ITSN1. Interacts with AGFG1 and CALM. May interact with ACVR1; linking this receptor to clathrin-mediated endocytosis. In terms of tissue distribution, predominantly expressed in lymphoid cells.

The protein resides in the membrane. Its subcellular location is the clathrin-coated pit. Its function is as follows. Functions in an early step of clathrin-mediated endocytosis. Has both a membrane binding/bending activity and the ability to recruit proteins essential to the formation of functional clathrin-coated pits. May regulate Bmp signaling by regulating clathrin-mediated endocytosis of Bmp receptors. Involved in the regulation of T-cell poliferation and activation. Affects TCR clustering upon receptor triggering and modulates its internalisation, playing a role in TCR-dependent T-cell activation. This chain is F-BAR domain only protein 1, found in Homo sapiens (Human).